Consider the following 43-residue polypeptide: Structural protein ORF5a (43 aa).

A helical membrane pass occupies residues 2–22; that stretch reads FSQIGAFLDSALLLLVAFFAV.

Belongs to the arteriviridae ORF5a protein family. Interacts with proteins GP2B and GP4.

The protein localises to the virion. It localises to the host cell membrane. Minor virion component that plays an essential role in virus infectivity. The protein is Structural protein ORF5a of Sus scrofa (Pig).